Consider the following 113-residue polypeptide: Hydrogenase maturation factor HybF (113 aa).

Residues His2 and Glu3 each contribute to the Ni(2+) site. Residues Cys73, Cys76, Cys89, and Cys92 each coordinate Zn(2+).

This sequence belongs to the HypA/HybF family. HybF subfamily.

Functionally, involved in the maturation of [NiFe] hydrogenases. Required for nickel insertion into the metal center of the hydrogenase. This chain is Hydrogenase maturation factor HybF, found in Morganella morganii (Proteus morganii).